Consider the following 390-residue polypeptide: Putative cyclin-F2-1 (390 aa).

A disordered region spans residues 135–154 (YNGDDDAPAPDDSMASRPQL).

It belongs to the cyclin family. Cyclin F subfamily.

In Oryza sativa subsp. japonica (Rice), this protein is Putative cyclin-F2-1 (CycF2-1).